The chain runs to 115 residues: T cell receptor beta variable 7-8 (115 aa).

A signal peptide spans 1 to 21 (MGTRLLCWVVLGFLGTDHTGA). Residues 22-115 (GVSQSPRYKV…SAVYLCASSL (94 aa)) form the Ig-like domain. An intrachain disulfide couples C42 to C111.

As to quaternary structure, alpha-beta TR is a heterodimer composed of an alpha and beta chain; disulfide-linked. The alpha-beta TR is associated with the transmembrane signaling CD3 coreceptor proteins to form the TR-CD3 (TcR or TCR). The assembly of alpha-beta TR heterodimers with CD3 occurs in the endoplasmic reticulum where a single alpha-beta TR heterodimer associates with one CD3D-CD3E heterodimer, one CD3G-CD3E heterodimer and one CD247 homodimer forming a stable octameric structure. CD3D-CD3E and CD3G-CD3E heterodimers preferentially associate with TR alpha and TR beta chains, respectively. The association of the CD247 homodimer is the last step of TcR assembly in the endoplasmic reticulum and is required for transport to the cell surface.

It is found in the cell membrane. Functionally, v region of the variable domain of T cell receptor (TR) beta chain that participates in the antigen recognition. Alpha-beta T cell receptors are antigen specific receptors which are essential to the immune response and are present on the cell surface of T lymphocytes. Recognize peptide-major histocompatibility (MH) (pMH) complexes that are displayed by antigen presenting cells (APC), a prerequisite for efficient T cell adaptive immunity against pathogens. Binding of alpha-beta TR to pMH complex initiates TR-CD3 clustering on the cell surface and intracellular activation of LCK that phosphorylates the ITAM motifs of CD3G, CD3D, CD3E and CD247 enabling the recruitment of ZAP70. In turn ZAP70 phosphorylates LAT, which recruits numerous signaling molecules to form the LAT signalosome. The LAT signalosome propagates signal branching to three major signaling pathways, the calcium, the mitogen-activated protein kinase (MAPK) kinase and the nuclear factor NF-kappa-B (NF-kB) pathways, leading to the mobilization of transcription factors that are critical for gene expression and essential for T cell growth and differentiation. The T cell repertoire is generated in the thymus, by V-(D)-J rearrangement. This repertoire is then shaped by intrathymic selection events to generate a peripheral T cell pool of self-MH restricted, non-autoaggressive T cells. Post-thymic interaction of alpha-beta TR with the pMH complexes shapes TR structural and functional avidity. This is T cell receptor beta variable 7-8 from Homo sapiens (Human).